We begin with the raw amino-acid sequence, 609 residues long: UvrABC system protein C (609 aa).

The GIY-YIG domain occupies 16 to 94; that stretch reads SSPGVYRMYD…IKQYMPKYNV (79 aa). The region spanning 203 to 238 is the UVR domain; the sequence is QQVMSVLVQKMEQASSDMRYEQAALYRDQITALRRV.

This sequence belongs to the UvrC family. Interacts with UvrB in an incision complex.

It localises to the cytoplasm. Its function is as follows. The UvrABC repair system catalyzes the recognition and processing of DNA lesions. UvrC both incises the 5' and 3' sides of the lesion. The N-terminal half is responsible for the 3' incision and the C-terminal half is responsible for the 5' incision. In Shewanella pealeana (strain ATCC 700345 / ANG-SQ1), this protein is UvrABC system protein C.